The primary structure comprises 340 residues: Sulfotransferase 2B1 (340 aa).

Residue 67-72 (KSGTNW) participates in 3'-phosphoadenylyl sulfate binding. Residues tryptophan 95 and tryptophan 100 each coordinate substrate. The active-site Proton acceptor is the histidine 122. 3'-phosphoadenylyl sulfate contacts are provided by residues arginine 144, serine 152, tyrosine 207, 241 to 246 (SAFAAM), and 271 to 273 (RKG). Residues 301–340 (LPSFPWDRSAEDGSPDGETEPSPSPSPGLASDDPNPGSSQ) form a disordered region.

It belongs to the sulfotransferase 1 family. In terms of tissue distribution, isoform 1 is expressed in skin and testis. Higher level of isoform 2 expressed in skin and intestine, moderate level in the kidney, low level in liver, stomach and placenta.

It localises to the cytoplasm. It is found in the cytosol. Its subcellular location is the microsome. The protein resides in the nucleus. It carries out the reaction an alcohol + 3'-phosphoadenylyl sulfate = an alkyl sulfate + adenosine 3',5'-bisphosphate + H(+). The enzyme catalyses pregnenolone + 3'-phosphoadenylyl sulfate = pregnenolone sulfate + adenosine 3',5'-bisphosphate + H(+). The catalysed reaction is 3beta-hydroxyandrost-5-en-17-one + 3'-phosphoadenylyl sulfate = dehydroepiandrosterone 3-sulfate + adenosine 3',5'-bisphosphate + H(+). It catalyses the reaction cholesterol + 3'-phosphoadenylyl sulfate = cholesterol sulfate + adenosine 3',5'-bisphosphate + H(+). Sulfotransferase that utilizes 3'-phospho-5'-adenylyl sulfate (PAPS) as sulfonate donor to catalyze the sulfate conjugation. Sulfonation increases the water solubility of most compounds, and therefore their renal excretion, but it can also result in bioactivation to form active metabolites. Sulfonates cholesterol. Catalyzes sulfation of the 3beta-hydroxyl groups of steroids, such as, pregnenolone and dehydroepiandrosterone (DHEA). Conjugates efficiently cholesterol but has a greater affinity for pregnenolone sulfation. Does not show high activity with DHEA. Plays a role in epidermal cholesterol metabolism and in the regulation of epidermal proliferation and differentiation. Its function is as follows. Prefers pregnenolone over DHEA as a substrate and does not sulfate cholesterol. The sequence is that of Sulfotransferase 2B1 from Rattus norvegicus (Rat).